The sequence spans 190 residues: Nucleoside triphosphate pyrophosphatase (190 aa).

The active-site Proton acceptor is aspartate 69.

The protein belongs to the Maf family. The cofactor is a divalent metal cation.

Its subcellular location is the cytoplasm. It catalyses the reaction a ribonucleoside 5'-triphosphate + H2O = a ribonucleoside 5'-phosphate + diphosphate + H(+). The enzyme catalyses a 2'-deoxyribonucleoside 5'-triphosphate + H2O = a 2'-deoxyribonucleoside 5'-phosphate + diphosphate + H(+). Its function is as follows. Nucleoside triphosphate pyrophosphatase. May have a dual role in cell division arrest and in preventing the incorporation of modified nucleotides into cellular nucleic acids. The chain is Nucleoside triphosphate pyrophosphatase from Helicobacter pylori (strain Shi470).